We begin with the raw amino-acid sequence, 366 residues long: tRNA-specific 2-thiouridylase MnmA (366 aa).

ATP contacts are provided by residues 6–13 (GLSGGVDS) and methionine 32. Cysteine 96 serves as the catalytic Nucleophile. The cysteines at positions 96 and 196 are disulfide-linked. ATP is bound at residue glycine 120. Residues 146–148 (KDQ) are interaction with tRNA. Cysteine 196 acts as the Cysteine persulfide intermediate in catalysis. Residues 302–303 (RY) are interaction with tRNA.

This sequence belongs to the MnmA/TRMU family.

It is found in the cytoplasm. It carries out the reaction S-sulfanyl-L-cysteinyl-[protein] + uridine(34) in tRNA + AH2 + ATP = 2-thiouridine(34) in tRNA + L-cysteinyl-[protein] + A + AMP + diphosphate + H(+). Its function is as follows. Catalyzes the 2-thiolation of uridine at the wobble position (U34) of tRNA, leading to the formation of s(2)U34. This Treponema denticola (strain ATCC 35405 / DSM 14222 / CIP 103919 / JCM 8153 / KCTC 15104) protein is tRNA-specific 2-thiouridylase MnmA.